A 418-amino-acid chain; its full sequence is Tyrosine--tRNA ligase (418 aa).

Tyr34 contributes to the L-tyrosine binding site. The short motif at Pro39 to His48 is the 'HIGH' region element. Residues Tyr169 and Gln173 each contribute to the L-tyrosine site. The 'KMSKS' region motif lies at Lys229–Ser233. ATP is bound at residue Lys232. An S4 RNA-binding domain is found at Leu352–Tyr418.

It belongs to the class-I aminoacyl-tRNA synthetase family. TyrS type 1 subfamily. As to quaternary structure, homodimer.

Its subcellular location is the cytoplasm. The catalysed reaction is tRNA(Tyr) + L-tyrosine + ATP = L-tyrosyl-tRNA(Tyr) + AMP + diphosphate + H(+). In terms of biological role, catalyzes the attachment of tyrosine to tRNA(Tyr) in a two-step reaction: tyrosine is first activated by ATP to form Tyr-AMP and then transferred to the acceptor end of tRNA(Tyr). In Streptococcus pyogenes serotype M6 (strain ATCC BAA-946 / MGAS10394), this protein is Tyrosine--tRNA ligase.